The chain runs to 946 residues: Zinc finger protein rotund (946 aa).

2 disordered regions span residues 10-30 and 156-269; these read GPQLAHHPHSNPHNSSHGHSD and FRKP…HNLN. A compositionally biased stretch (polar residues) spans 161 to 176; sequence NNNGYSWSTGNNNEVV. Over residues 177–188 the composition is skewed to low complexity; the sequence is SHSSNGHTNNHP. Composition is skewed to polar residues over residues 198-230 and 242-269; these read ASATQATSVSAINLNQAQPASQTRSNFGSSIKS and TCKSQENNSGQNPTPNSLSDHNPAHNLN. 6 consecutive C2H2-type zinc fingers follow at residues 488-510, 517-539, 545-567, 573-597, 603-625, and 634-656; these read YQCKMCPQIFSSKADLQLHTQIH, YKCTQCSKAFANSSYLSQHTRIH, YRCEICQRKFTQLSHLQQHIRTH, YKCRHPGCQKAFSQLSNLQSHSRCH, FKCNSCYKCFSDEPSLLEHIPKH, and HICQYCGKSYTQETYLTKHMQKH. The interval 683–853 is disordered; the sequence is GGSANPANGP…TPSAVGPYDA (171 aa). Low complexity-rich tracts occupy residues 739 to 762 and 770 to 790; these read HQQQQQQQQQQQQQQQQQQQQQQQ and HGVPPQQHVPPQQQQQQQQQQ. Over residues 813 to 822 the composition is skewed to polar residues; sequence TAPNGSQSNG. A compositionally biased stretch (basic and acidic residues) spans 828-841; that stretch reads QPHHRMPDPVREDI.

It belongs to the krueppel C2H2-type zinc-finger protein family. As to quaternary structure, interacts with nab; which acts as a corepressor. Isoform rn and isoform roe are expressed in non-overlapping domains in the larval imaginal disks. Isoform rn is first expressed during the early third larval instar in the leg, wing, haltere and antennal part of the eye-antennal imaginal disk. It is observed as a ring in the leg and antenna disks and in the presumptive wing pouch and capitellum of wing and haltere disks respectively. In wing disk it is expressed in 3 concentric domains in the wing pouch. In late third instar, expression of isoform rn in the leg disk is no longer evident, but is maintained in the other disks. Isoform roe appears in the third instar and is confined to the eye part of the eye-antennal imaginal disk in a band of 4-6 cells at the morphogenetic furrow. There is no evidence of roe expression in other imaginal disks.

It is found in the nucleus. In terms of biological role, transcription factor involved in imaginal disks development. Isoform rn is required in the wings, antenna, haltere, proboscis and legs disks, while isoform roe is required in the eye disk. Together with nab corepressor, it is involved in the initiation and maintenance of wingless (wg) expression in the wing hinge, by limiting the expression of wg to this compartment. Also required for the epithelial-mesenchymal transition branch of basolateral junctions signaling. In Drosophila melanogaster (Fruit fly), this protein is Zinc finger protein rotund.